We begin with the raw amino-acid sequence, 382 residues long: Dual-specificity RNA methyltransferase RlmN (382 aa).

The active-site Proton acceptor is the Glu-95. In terms of domain architecture, Radical SAM core spans 101 to 348 (EDDRGTLCIS…TTVRKTRGDD (248 aa)). Cys-108 and Cys-353 are disulfide-bonded. The [4Fe-4S] cluster site is built by Cys-115, Cys-119, and Cys-122. S-adenosyl-L-methionine-binding positions include 179 to 180 (GE), Ser-211, 233 to 235 (SLH), and Asn-310. Cys-353 functions as the S-methylcysteine intermediate in the catalytic mechanism.

This sequence belongs to the radical SAM superfamily. RlmN family. Requires [4Fe-4S] cluster as cofactor.

It is found in the cytoplasm. The catalysed reaction is adenosine(2503) in 23S rRNA + 2 reduced [2Fe-2S]-[ferredoxin] + 2 S-adenosyl-L-methionine = 2-methyladenosine(2503) in 23S rRNA + 5'-deoxyadenosine + L-methionine + 2 oxidized [2Fe-2S]-[ferredoxin] + S-adenosyl-L-homocysteine. It carries out the reaction adenosine(37) in tRNA + 2 reduced [2Fe-2S]-[ferredoxin] + 2 S-adenosyl-L-methionine = 2-methyladenosine(37) in tRNA + 5'-deoxyadenosine + L-methionine + 2 oxidized [2Fe-2S]-[ferredoxin] + S-adenosyl-L-homocysteine. Its function is as follows. Specifically methylates position 2 of adenine 2503 in 23S rRNA and position 2 of adenine 37 in tRNAs. m2A2503 modification seems to play a crucial role in the proofreading step occurring at the peptidyl transferase center and thus would serve to optimize ribosomal fidelity. This is Dual-specificity RNA methyltransferase RlmN from Bordetella parapertussis (strain 12822 / ATCC BAA-587 / NCTC 13253).